We begin with the raw amino-acid sequence, 91 residues long: Small ribosomal subunit protein uS19 (91 aa).

It belongs to the universal ribosomal protein uS19 family.

Its function is as follows. Protein S19 forms a complex with S13 that binds strongly to the 16S ribosomal RNA. The protein is Small ribosomal subunit protein uS19 of Aromatoleum aromaticum (strain DSM 19018 / LMG 30748 / EbN1) (Azoarcus sp. (strain EbN1)).